The sequence spans 239 residues: Ribosomal RNA small subunit methyltransferase G (239 aa).

S-adenosyl-L-methionine contacts are provided by residues Gly-78, Phe-83, Ala-129 to Glu-130, and Arg-148.

The protein belongs to the methyltransferase superfamily. RNA methyltransferase RsmG family.

The protein resides in the cytoplasm. In terms of biological role, specifically methylates the N7 position of a guanine in 16S rRNA. This chain is Ribosomal RNA small subunit methyltransferase G, found in Clostridium botulinum (strain Eklund 17B / Type B).